The primary structure comprises 175 residues: Small ribosomal subunit protein uS7 (175 aa).

Belongs to the universal ribosomal protein uS7 family. In terms of assembly, part of the 30S ribosomal subunit. Contacts proteins S9 and S11.

In terms of biological role, one of the primary rRNA binding proteins, it binds directly to 16S rRNA where it nucleates assembly of the head domain of the 30S subunit. Is located at the subunit interface close to the decoding center, probably blocks exit of the E-site tRNA. The chain is Small ribosomal subunit protein uS7 from Legionella pneumophila (strain Paris).